Reading from the N-terminus, the 349-residue chain is S-adenosylmethionine:tRNA ribosyltransferase-isomerase (349 aa).

Belongs to the QueA family. As to quaternary structure, monomer.

The protein localises to the cytoplasm. It carries out the reaction 7-aminomethyl-7-carbaguanosine(34) in tRNA + S-adenosyl-L-methionine = epoxyqueuosine(34) in tRNA + adenine + L-methionine + 2 H(+). It participates in tRNA modification; tRNA-queuosine biosynthesis. In terms of biological role, transfers and isomerizes the ribose moiety from AdoMet to the 7-aminomethyl group of 7-deazaguanine (preQ1-tRNA) to give epoxyqueuosine (oQ-tRNA). The chain is S-adenosylmethionine:tRNA ribosyltransferase-isomerase from Pseudomonas entomophila (strain L48).